The sequence spans 138 residues: NADPH-dependent 7-cyano-7-deazaguanine reductase (138 aa).

The active-site Thioimide intermediate is cysteine 53. Catalysis depends on aspartate 60, which acts as the Proton donor. Residues 75–77 and 94–95 contribute to the substrate site; these read VEL and HE.

The protein belongs to the GTP cyclohydrolase I family. QueF type 1 subfamily.

The protein resides in the cytoplasm. It catalyses the reaction 7-aminomethyl-7-carbaguanine + 2 NADP(+) = 7-cyano-7-deazaguanine + 2 NADPH + 3 H(+). The protein operates within tRNA modification; tRNA-queuosine biosynthesis. Functionally, catalyzes the NADPH-dependent reduction of 7-cyano-7-deazaguanine (preQ0) to 7-aminomethyl-7-deazaguanine (preQ1). The chain is NADPH-dependent 7-cyano-7-deazaguanine reductase from Gloeothece citriformis (strain PCC 7424) (Cyanothece sp. (strain PCC 7424)).